Here is an 813-residue protein sequence, read N- to C-terminus: Ubiquitin carboxyl-terminal hydrolase 45 (813 aa).

Positions Met-1–Gly-14 are enriched in basic and acidic residues. A disordered region spans residues Met-1–Asp-27. An interaction with ERCC1 region spans residues Met-1 to Cys-62. Residues Ser-28 and Ser-29 each carry the phosphoserine modification. The segment at Leu-36–His-153 adopts a UBP-type zinc-finger fold. Residues Cys-38, His-40, Cys-62, Cys-65, Cys-85, Cys-88, Cys-93, His-101, His-105, His-114, Cys-127, and Cys-130 each contribute to the Zn(2+) site. Residues Lys-191 to Ile-812 form the USP domain. The Nucleophile role is filled by Cys-200. 2 stretches are compositionally biased toward basic and acidic residues: residues Leu-405–Lys-414 and Trp-450–Asn-466. Positions Leu-405–Glu-552 are disordered. The span at Pro-472–Asp-488 shows a compositional bias: polar residues. Ser-507 and Ser-525 each carry phosphoserine. Positions Ser-521 to Pro-533 are enriched in basic and acidic residues. The active-site Proton acceptor is His-745.

It belongs to the peptidase C19 family. As to quaternary structure, interacts with ERCC1. The catalytically active form interacts with SPDL1. Retina.

The protein localises to the photoreceptor inner segment. The protein resides in the cytoplasm. Its subcellular location is the nucleus. The enzyme catalyses Thiol-dependent hydrolysis of ester, thioester, amide, peptide and isopeptide bonds formed by the C-terminal Gly of ubiquitin (a 76-residue protein attached to proteins as an intracellular targeting signal).. In terms of biological role, catalyzes the deubiquitination of SPDL1. Plays a role in the repair of UV-induced DNA damage via deubiquitination of ERCC1, promoting its recruitment to DNA damage sites. May be involved in the maintenance of photoreceptor function. May play a role in normal retinal development. Plays a role in cell migration. The polypeptide is Ubiquitin carboxyl-terminal hydrolase 45 (Usp45) (Mus musculus (Mouse)).